We begin with the raw amino-acid sequence, 88 residues long: Phosphoribosyl-ATP pyrophosphatase (88 aa).

The protein belongs to the PRA-PH family.

It localises to the cytoplasm. It carries out the reaction 1-(5-phospho-beta-D-ribosyl)-ATP + H2O = 1-(5-phospho-beta-D-ribosyl)-5'-AMP + diphosphate + H(+). The protein operates within amino-acid biosynthesis; L-histidine biosynthesis; L-histidine from 5-phospho-alpha-D-ribose 1-diphosphate: step 2/9. This is Phosphoribosyl-ATP pyrophosphatase from Cutibacterium acnes (strain DSM 16379 / KPA171202) (Propionibacterium acnes).